Here is a 401-residue protein sequence, read N- to C-terminus: Phosphoglycerate kinase 3, cytosolic (401 aa).

(2R)-3-phosphoglycerate-binding residues include valine 24, aspartate 25, asparagine 27, arginine 41, serine 63, histidine 64, glycine 66, arginine 67, arginine 122, histidine 154, and arginine 155. Residue glycine 200 coordinates ADP. Glycine 200 lines the CDP pocket. Residues lysine 202 and lysine 206 each contribute to the AMP site. Residue lysine 206 participates in ATP binding. Position 224 (glycine 224) interacts with ADP. A CDP-binding site is contributed by glycine 224. The AMP site is built by glycine 225 and glycine 297. Positions 225, 297, and 321 each coordinate ATP. 2 residues coordinate CDP: glycine 322 and phenylalanine 327. Phenylalanine 327 is a binding site for ADP. Glutamate 328 is an AMP binding site. Residues glutamate 328, aspartate 359, and serine 360 each contribute to the ATP site. Aspartate 359 is a binding site for Mg(2+).

The protein belongs to the phosphoglycerate kinase family. Monomer. Mg(2+) serves as cofactor. In terms of tissue distribution, expressed in roots, leaves and inflorescence.

It is found in the cytoplasm. The enzyme catalyses (2R)-3-phosphoglycerate + ATP = (2R)-3-phospho-glyceroyl phosphate + ADP. The protein operates within carbohydrate degradation; glycolysis; pyruvate from D-glyceraldehyde 3-phosphate: step 2/5. The protein is Phosphoglycerate kinase 3, cytosolic of Arabidopsis thaliana (Mouse-ear cress).